A 416-amino-acid polypeptide reads, in one-letter code: Basic salivary proline-rich protein 2 (416 aa).

An N-terminal signal peptide occupies residues 1–16 (MLLILLSVALLALSSA). At glutamine 17 the chain carries Pyrrolidone carboxylic acid. Polar residues predominate over residues 19 to 28 (LNEDVSQEES). The disordered stretch occupies residues 19–416 (LNEDVSQEES…QGGRPSRPPQ (398 aa)). Serine 24 carries the post-translational modification Phosphoserine. The segment covering 34–47 (GNPQGAPPQGGNKP) has biased composition (low complexity). Pro residues-rich tracts occupy residues 48 to 104 (QGPP…PPPQ) and 112 to 165 (RSPP…PPPQ). Serine 52 is subject to Phosphoserine. 15 consecutive repeat copies span residues 53–72 (PPGK…QGPP), 74–93 (PPGK…QGPP), 94–113 (PPGK…SPRS), 114–133 (PPGK…QGPP), 135–154 (PPGK…QGPP), 155–174 (PPGK…RSSR), 176–195 (PPGK…QGPP), 197–216 (PPGK…QGPP), 217–236 (PPGK…QSAR), 238–257 (PPGK…QGPP), 259–278 (PPGK…QGPP), 279–298 (PPGK…RSSR), 300–319 (PPGK…QGPP), 321–340 (PPGK…QGPP), and 341–360 (PPGK…RSAR). The 15 X 20 AA approximate tandem repeats of P-P-G-K-P-Q-G-P-P-P-Q-G-[GD]-[NKS]-[KSQ]-[PRS]-[QRS] [GPS]-[PSAR]-[PSR] stretch occupies residues 53-360 (PPGKPQGPPP…QGGSKSRSAR (308 aa)). N-linked (GlcNAc...) asparagine glycosylation occurs at asparagine 168. Over residues 177 to 227 (PGKPQGPPPQGGNQPQGPPPPPGKPQGPPPQGGNKPQGPPPPGKPQGPPPQ) the composition is skewed to pro residues. Asparagine 230 carries N-linked (GlcNAc...) asparagine glycosylation. O-linked (Hex) serine glycosylation occurs at serine 232. Positions 239-289 (PGKPQGPPPQGGNQPQGPPPPPGKPQGPPPQGGNKPQGPPPPGKPQGPPPQ) are enriched in pro residues. Residue asparagine 272 is glycosylated (N-linked (GlcNAc...) asparagine). A compositionally biased stretch (low complexity) spans 290 to 300 (GGSKSRSSRSP). Composition is skewed to pro residues over residues 301-351 (PGKP…PPPQ) and 378-416 (QGPP…RPPQ).

In terms of processing, N- and O-glycosylated. In head and neck cancer patients, O-glycosylated with glucosylgalactosyl carbohydrate moiety. This modification would require prior hydroxylation on the lysine residue. Proteolytically cleaved at the tripeptide Xaa-Pro-Gln, where Xaa in the P(3) position is mostly lysine. The endoprotease may be of microbial origin. Post-translationally, pyroglutamate formation occurs on terminal Gln residues of cleaved peptides. Pyroglutamate formation found on at least Gln-398 and Gln-400.

The protein resides in the secreted. This is Basic salivary proline-rich protein 2 (PRB2) from Homo sapiens (Human).